The primary structure comprises 364 residues: Autophagy-related protein 5 (364 aa).

A compositionally biased stretch (polar residues) spans 1-13 (MASPNPYSYSPQL). The segment at 1–103 (MASPNPYSYS…SLPPKPKPSS (103 aa)) is disordered. Residues 28–42 (SSPSFRSTPFRSSRG) show a composition bias toward low complexity. Residues 43 to 53 (TGAGTGIGLGL) are compositionally biased toward gly residues. Over residues 72-82 (RSGDGSHDDLP) the composition is skewed to basic and acidic residues. Residue Lys-202 forms a Glycyl lysine isopeptide (Lys-Gly) (interchain with G-Cter in ATG12) linkage. Residues 262–306 (PSSPSPPSSDQQQPQRPGGSSSSGSYRVMQTLVPPRGPNNRTPQT) are disordered. Residues 269–286 (SSDQQQPQRPGGSSSSGS) show a composition bias toward low complexity.

It belongs to the ATG5 family. Conjugated with atg12. Conjugated to atg12; which is essential for autophagy.

Its subcellular location is the preautophagosomal structure membrane. Involved in cytoplasm to vacuole transport (Cvt) and autophagic vesicle formation. Autophagy is essential for maintenance of amino acid levels and protein synthesis under nitrogen starvation. Required for selective autophagic degradation of the nucleus (nucleophagy). Also required for mitophagy, which eliminates defective or superfluous mitochondria in order to fulfill cellular energy requirements and prevent excess ROS production. Conjugation with atg12, through a ubiquitin-like conjugating system involving apg-5/atg7 as an E1-like activating enzyme and atg10 as an E2-like conjugating enzyme, is essential for its function. The atg12-apg-4/atg5 conjugate acts as an E3-like enzyme which is required for lipidation of apg-6/atg8 and apg-6/atg8 association to the vesicle membranes. The chain is Autophagy-related protein 5 (apg-4) from Neurospora crassa (strain ATCC 24698 / 74-OR23-1A / CBS 708.71 / DSM 1257 / FGSC 987).